We begin with the raw amino-acid sequence, 336 residues long: MLYRIARAGIFKLDAEKAHDLAIQNFKRFNGTPLDIFYRQNLASKPVEVMGIKFKNPVGLAAGLDKNGECIEAFGAMGFGFVEVGTVTPRPQSGNDKPRLFRLIEAEGIINRMGFNNLGVDNLVENVKKAKYDGVIGINIGKNKDTPIEKGTEDYLICMEKVYQYAGYIAINISSPNTPGLRTLQYGEALDDLLSQLKEKQKELAEKYGKYVPVALKIAPDLEDDELTQIAESLIKYKIDGVIATNTTLDRSMVEGMKHAEEMGGLSGRPVQTRSTEVVRRLKELLGDNLPIIGVGGIDSYVAAKEKMVAGAELVQVYSGFIYKGPGLVRDIVNNI.

Residues 62 to 66 (AGLDK) and Thr86 each bind FMN. Lys66 serves as a coordination point for substrate. Residue 111-115 (NRMGF) participates in substrate binding. Residues Asn139 and Asn172 each coordinate FMN. Asn172 provides a ligand contact to substrate. Catalysis depends on Ser175, which acts as the Nucleophile. Asn177 contacts substrate. Residues Lys217 and Thr245 each contribute to the FMN site. Position 246 to 247 (246 to 247 (NT)) interacts with substrate. FMN-binding positions include Gly268, Gly297, and 318–319 (YS).

The protein belongs to the dihydroorotate dehydrogenase family. Type 2 subfamily. As to quaternary structure, monomer. It depends on FMN as a cofactor.

It localises to the cell membrane. The catalysed reaction is (S)-dihydroorotate + a quinone = orotate + a quinol. It participates in pyrimidine metabolism; UMP biosynthesis via de novo pathway; orotate from (S)-dihydroorotate (quinone route): step 1/1. Catalyzes the conversion of dihydroorotate to orotate with quinone as electron acceptor. This is Dihydroorotate dehydrogenase (quinone) from Aliivibrio fischeri (strain MJ11) (Vibrio fischeri).